The following is a 71-amino-acid chain: MNLAVIGAGIAVLTGLGAGIGIGIATGRATEAIARQPEAASKIQTALIIGAGLAEATAIYGLIIAFMILTK.

2 helical membrane passes run 4-24 (AVIG…GIGI) and 48-68 (IIGA…AFMI).

Belongs to the ATPase C chain family. In terms of assembly, F-type ATPases have 2 components, F(1) - the catalytic core - and F(0) - the membrane proton channel. F(1) has five subunits: alpha(3), beta(3), gamma(1), delta(1), epsilon(1). F(0) has three main subunits: a(1), b(2) and c(10-14). The alpha and beta chains form an alternating ring which encloses part of the gamma chain. F(1) is attached to F(0) by a central stalk formed by the gamma and epsilon chains, while a peripheral stalk is formed by the delta and b chains.

It is found in the cell membrane. Its function is as follows. F(1)F(0) ATP synthase produces ATP from ADP in the presence of a proton or sodium gradient. F-type ATPases consist of two structural domains, F(1) containing the extramembraneous catalytic core and F(0) containing the membrane proton channel, linked together by a central stalk and a peripheral stalk. During catalysis, ATP synthesis in the catalytic domain of F(1) is coupled via a rotary mechanism of the central stalk subunits to proton translocation. In terms of biological role, key component of the F(0) channel; it plays a direct role in translocation across the membrane. A homomeric c-ring of between 10-14 subunits forms the central stalk rotor element with the F(1) delta and epsilon subunits. This Clostridium botulinum (strain Alaska E43 / Type E3) protein is ATP synthase subunit c.